The sequence spans 447 residues: UPF0210 protein LBUL_0934 (447 aa).

It belongs to the UPF0210 family. Homodimer.

The chain is UPF0210 protein LBUL_0934 from Lactobacillus delbrueckii subsp. bulgaricus (strain ATCC BAA-365 / Lb-18).